A 233-amino-acid polypeptide reads, in one-letter code: Superoxide dismutase [Mn] 3.4, mitochondrial (233 aa).

Residues 1–29 (MALRTLASKNALSFALGGAARPSAASARG) constitute a mitochondrion transit peptide. Mn(2+)-binding residues include His57, His105, Asp194, and His198.

This sequence belongs to the iron/manganese superoxide dismutase family. As to quaternary structure, homotetramer. It depends on Mn(2+) as a cofactor.

Its subcellular location is the mitochondrion matrix. The catalysed reaction is 2 superoxide + 2 H(+) = H2O2 + O2. Functionally, destroys superoxide anion radicals which are normally produced within the cells and which are toxic to biological systems. The sequence is that of Superoxide dismutase [Mn] 3.4, mitochondrial (SODA.3) from Zea mays (Maize).